The primary structure comprises 725 residues: Exocyst complex component 8 (725 aa).

Phosphoserine is present on Ser19. The tract at residues 116 to 159 (AASGGEEGGGGAGGRDQLRGQTGFFPSPGGASRDGSGPGEEGKQ) is disordered. Residues 120–129 (GEEGGGGAGG) are compositionally biased toward gly residues. The region spanning 182 to 282 (YLVYNGDLVE…WLEVLEETKR (101 aa)) is the PH domain. The interval 285–322 (SEKRRREQEEAAAPRGPPQVTPKASNPFEDEDDDEPTV) is disordered. Over residues 312–322 (FEDEDDDEPTV) the composition is skewed to acidic residues.

Belongs to the EXO84 family. In terms of assembly, the exocyst complex is composed of EXOC1, EXOC2, EXOC3, EXOC4, EXOC5, EXOC6, EXOC7 and EXOC8. Interacts (via PH domain) with GTP-bound RALA and RALB. Interacts with SH3BP1; required for the localization of both SH3BP1 and the exocyst to the leading edge of migrating cells.

It localises to the cytoplasm. It is found in the perinuclear region. The protein resides in the cell projection. The protein localises to the growth cone. In terms of biological role, component of the exocyst complex involved in the docking of exocytic vesicles with fusion sites on the plasma membrane. The polypeptide is Exocyst complex component 8 (EXOC8) (Bos taurus (Bovine)).